The following is a 509-amino-acid chain: DNA nucleotidylexotransferase (509 aa).

A disordered region spans residues 1-24 (MDPPRASHLSPRKKRPRQTGALMA). Positions 11–17 (PRKKRPR) match the Nuclear localization signal motif. The region spanning 27 to 124 (PQDIKFQDLV…KPVEMTGKHQ (98 aa)) is the BRCT domain. Residue Ser134 is modified to Phosphoserine. The tract at residues 151-509 (SQYACQRRTT…DYIEPWERNA (359 aa)) is mediates interaction with DNTTIP2. Residues 258 to 262 (VGLKT) form an involved in DNA binding region. A 2'-deoxyribonucleoside 5'-triphosphate-binding positions include 333–338 (GFRRGK) and 342–345 (HDVD). Mg(2+) contacts are provided by Asp343, Asp345, and Asp433. 448 to 449 (GW) is an a 2'-deoxyribonucleoside 5'-triphosphate binding site.

The protein belongs to the DNA polymerase type-X family. As to quaternary structure, interacts with PRP19 and DNTTIP1. Forms a ternary complex with DNTTIP2 and core histone. Released from this complex by PCNA. Interacts with TRERF1. Mg(2+) is required as a cofactor.

The protein localises to the nucleus. The enzyme catalyses DNA(n) + a 2'-deoxyribonucleoside 5'-triphosphate = DNA(n+1) + diphosphate. Functionally, template-independent DNA polymerase which catalyzes the random addition of deoxynucleoside 5'-triphosphate to the 3'-end of a DNA initiator. One of the in vivo functions of this enzyme is the addition of nucleotides at the junction (N region) of rearranged Ig heavy chain and T-cell receptor gene segments during the maturation of B- and T-cells. The polypeptide is DNA nucleotidylexotransferase (DNTT) (Homo sapiens (Human)).